The primary structure comprises 578 residues: Triokinase/FMN cyclase (578 aa).

The DhaK domain maps to 9–336; it reads SVEGCAGDAL…IDAETNAKAW (328 aa). Dihydroxyacetone contacts are provided by residues 56 to 59, Lys-109, and Asp-114; that span reads GSGH. Catalysis depends on His-221, which acts as the Tele-hemiaminal-histidine intermediate. One can recognise a DhaL domain in the interval 372–571; it reads KQMTLVLDRI…AAAIFRAILE (200 aa). Residues 401–404, 446–447, Gly-486, and 494–495 contribute to the ATP site; these read DGDC, SS, and TM. Phosphoserine occurs at positions 511 and 545. Residue 556–558 participates in ATP binding; it reads DPG.

It belongs to the dihydroxyacetone kinase (DAK) family. Homodimer. Interacts with IFIH1 (via the CARD domains), the interaction is inhibited by viral infection. Requires Mg(2+) as cofactor. The cofactor is Mn(2+). Co(2+) is required as a cofactor.

It catalyses the reaction dihydroxyacetone + ATP = dihydroxyacetone phosphate + ADP + H(+). It carries out the reaction D-glyceraldehyde + ATP = D-glyceraldehyde 3-phosphate + ADP + H(+). The enzyme catalyses FAD = riboflavin cyclic-4',5'-phosphate + AMP + H(+). Each activity is inhibited by the substrate(s) of the other. In terms of biological role, catalyzes both the phosphorylation of dihydroxyacetone and of glyceraldehyde, and the splitting of ribonucleoside diphosphate-X compounds among which FAD is the best substrate. Represses IFIH1-mediated cellular antiviral response. The polypeptide is Triokinase/FMN cyclase (Tkfc) (Rattus norvegicus (Rat)).